Consider the following 251-residue polypeptide: Small ribosomal subunit protein uS3 (251 aa).

Residues Leu-22–Glu-93 enclose the KH type-2 domain. Residues Thr-223–Ala-251 form a disordered region. Residues Glu-232–Ala-251 are compositionally biased toward acidic residues.

The protein belongs to the universal ribosomal protein uS3 family. As to quaternary structure, component of the small ribosomal subunit. Mature ribosomes consist of a small (40S) and a large (60S) subunit. The 40S subunit contains about 32 different proteins and 1 molecule of RNA (18S). The 60S subunit contains 45 different proteins and 3 molecules of RNA (25S, 5.8S and 5S).

It localises to the cytoplasm. Component of the ribosome, a large ribonucleoprotein complex responsible for the synthesis of proteins in the cell. The small ribosomal subunit (SSU) binds messenger RNAs (mRNAs) and translates the encoded message by selecting cognate aminoacyl-transfer RNA (tRNA) molecules. The large subunit (LSU) contains the ribosomal catalytic site termed the peptidyl transferase center (PTC), which catalyzes the formation of peptide bonds, thereby polymerizing the amino acids delivered by tRNAs into a polypeptide chain. The nascent polypeptides leave the ribosome through a tunnel in the LSU and interact with protein factors that function in enzymatic processing, targeting, and the membrane insertion of nascent chains at the exit of the ribosomal tunnel. This chain is Small ribosomal subunit protein uS3 (RPS3), found in Candida albicans (strain SC5314 / ATCC MYA-2876) (Yeast).